The sequence spans 216 residues: Ornithine decarboxylase antizyme 1 (216 aa).

It belongs to the ODC antizyme family. In terms of assembly, interacts with ODC1 and thereby sterically blocks ODC homodimerization.

Ornithine decarboxylase (ODC) antizyme protein that negatively regulates ODC activity and intracellular polyamine biosynthesis and uptake in response to increased intracellular polyamine levels. Binds to ODC monomers, inhibiting the assembly of the functional ODC homodimer, and targets the monomers for ubiquitin-independent proteolytic destruction by the 26S proteasome. The chain is Ornithine decarboxylase antizyme 1 (oaz1) from Xenopus laevis (African clawed frog).